The primary structure comprises 443 residues: Glutamyl-tRNA reductase (443 aa).

Substrate-binding positions include 49–52 (TCNR), serine 109, 114–116 (ETQ), and glutamine 120. Cysteine 50 (nucleophile) is an active-site residue. An NADP(+)-binding site is contributed by 189-194 (GAGKMG).

This sequence belongs to the glutamyl-tRNA reductase family. In terms of assembly, homodimer.

The enzyme catalyses (S)-4-amino-5-oxopentanoate + tRNA(Glu) + NADP(+) = L-glutamyl-tRNA(Glu) + NADPH + H(+). It participates in porphyrin-containing compound metabolism; protoporphyrin-IX biosynthesis; 5-aminolevulinate from L-glutamyl-tRNA(Glu): step 1/2. In terms of biological role, catalyzes the NADPH-dependent reduction of glutamyl-tRNA(Glu) to glutamate 1-semialdehyde (GSA). This Bacillus mycoides (strain KBAB4) (Bacillus weihenstephanensis) protein is Glutamyl-tRNA reductase.